The sequence spans 467 residues: UDP-N-acetylmuramate--L-alanine ligase (467 aa).

114–120 (GTHGKTT) serves as a coordination point for ATP.

Belongs to the MurCDEF family.

Its subcellular location is the cytoplasm. The catalysed reaction is UDP-N-acetyl-alpha-D-muramate + L-alanine + ATP = UDP-N-acetyl-alpha-D-muramoyl-L-alanine + ADP + phosphate + H(+). The protein operates within cell wall biogenesis; peptidoglycan biosynthesis. In terms of biological role, cell wall formation. The polypeptide is UDP-N-acetylmuramate--L-alanine ligase (Rhodopseudomonas palustris (strain BisA53)).